Consider the following 637-residue polypeptide: 1-deoxy-D-xylulose-5-phosphate synthase (637 aa).

Thiamine diphosphate contacts are provided by residues histidine 74 and 115-117 (GHS). Residue aspartate 146 participates in Mg(2+) binding. Residues 147–148 (GA), asparagine 175, tyrosine 285, and glutamate 366 each bind thiamine diphosphate. Position 175 (asparagine 175) interacts with Mg(2+).

Belongs to the transketolase family. DXPS subfamily. Homodimer. Mg(2+) serves as cofactor. Requires thiamine diphosphate as cofactor.

The enzyme catalyses D-glyceraldehyde 3-phosphate + pyruvate + H(+) = 1-deoxy-D-xylulose 5-phosphate + CO2. The protein operates within metabolic intermediate biosynthesis; 1-deoxy-D-xylulose 5-phosphate biosynthesis; 1-deoxy-D-xylulose 5-phosphate from D-glyceraldehyde 3-phosphate and pyruvate: step 1/1. Functionally, catalyzes the acyloin condensation reaction between C atoms 2 and 3 of pyruvate and glyceraldehyde 3-phosphate to yield 1-deoxy-D-xylulose-5-phosphate (DXP). In Pelotomaculum thermopropionicum (strain DSM 13744 / JCM 10971 / SI), this protein is 1-deoxy-D-xylulose-5-phosphate synthase.